A 135-amino-acid polypeptide reads, in one-letter code: Small ribosomal subunit protein eS6 (135 aa).

The protein belongs to the eukaryotic ribosomal protein eS6 family.

The chain is Small ribosomal subunit protein eS6 from Methanospirillum hungatei JF-1 (strain ATCC 27890 / DSM 864 / NBRC 100397 / JF-1).